The chain runs to 488 residues: MASKILLNVQEEVTCPICLELLTEPLSLDCGHSLCRACITVSNKEAVTSMGGKSSCPVCGISYSFEHLQANQHLANIVERLKEVKLSPDNGKKRDLCDHHGEKLLLFCKEDRKVICWLCERSQEHRGHHTVLTEEVFKECQEKLQAVLKRLKKEEEEAEKLEADIREEKTSWKYQVQTERQRIQTEFDQLRSILNNEEQRELQRLEEEEKKTLDKFAEAEDELVQQKQLVRELISDVECRSQWSTMELLQDMSGIMKWSEIWRLKKPKMVSKKLKTVFHAPDLSRMLQMFRELTAVRCYWVDVTLNSVNLNLNLVLSEDQRQVISVPIWPFQCYNYGVLGSQYFSSGKHYWEVDVSKKTAWILGVYCRTYSRHMKYVVRRCANRQNLYTKYRPLFGYWVIGLQNKCKYGVFEESLSSDPEVLTLSMAVPPCRVGVFLDYEAGIVSFFNVTSHGSLIYKFSKCCFSQPVYPYFNPWNCPAPMTLCPPSS.

Residues 15–60 (CPICLELLTEPLSLDCGHSLCRACITVSNKEAVTSMGGKSSCPVCG) form an RING-type zinc finger. The B box-type zinc-finger motif lies at 92 to 134 (KKRDLCDHHGEKLLLFCKEDRKVICWLCERSQEHRGHHTVLTE). Residues Cys-97, His-100, Cys-119, and His-125 each coordinate Zn(2+). A coiled-coil region spans residues 131-239 (VLTEEVFKEC…VRELISDVEC (109 aa)). Positions 283 to 488 (LSRMLQMFRE…APMTLCPPSS (206 aa)) constitute a B30.2/SPRY domain.

It belongs to the TRIM/RBCC family. Homotrimer. Interacts (via B-box and SPRY domain) with TRIM5. In terms of assembly, (Microbial infection) Interacts (via the B30.2/SPRY domain) with HIV-1 capsid complexes. As to expression, is the most abundant form. It is highly expressed in the placenta, spleen, colon and peripheral blood leukocytes.

The protein localises to the cytoplasm. The protein resides in the mitochondrion. The catalysed reaction is S-ubiquitinyl-[E2 ubiquitin-conjugating enzyme]-L-cysteine + [acceptor protein]-L-lysine = [E2 ubiquitin-conjugating enzyme]-L-cysteine + N(6)-ubiquitinyl-[acceptor protein]-L-lysine.. It participates in protein modification; protein ubiquitination. Functions as antiviral protein and contributes to the defense against retroviral infections. Acts as a capsid-specific restriction factor with the help of TRIM5 and prevents infection from non-host-adapted retroviruses. During influenza A virus infection, promotes programmed cell death by targeting ZBP1 for 'Lys-63'-linked polyubiquitination. In turn, promotes ZBP1 recruitment of RIPK3 to mediate virus-induced programmed necrosis. Negatively regulates the function of mitochondria by enhancing mitochondrial depolarization leading to cytochrome c release and mitochondria-dependent apoptosis. Also promotes the formation of multinucleated giant cells by means of cell fusion and phagocytosis in epithelial cells. This Homo sapiens (Human) protein is E3 ubiquitin-protein ligase TRIM34 (TRIM34).